Reading from the N-terminus, the 493-residue chain is Galactose-1-phosphate uridylyltransferase (493 aa).

Belongs to the galactose-1-phosphate uridylyltransferase type 2 family.

The protein resides in the cytoplasm. It catalyses the reaction alpha-D-galactose 1-phosphate + UDP-alpha-D-glucose = alpha-D-glucose 1-phosphate + UDP-alpha-D-galactose. The protein operates within carbohydrate metabolism; galactose metabolism. This chain is Galactose-1-phosphate uridylyltransferase, found in Streptococcus thermophilus (strain CNRZ 1066).